We begin with the raw amino-acid sequence, 191 residues long: MNECPPGTRPFRVRHAAAELRQGGVVAYPTEAVWGLGCDPRNADAVARLLALKGRPERQGLILIAAESRQLARYLAPLPAEWAETIQASWPGPMTWVLPASTRAPRWVSGGRDTLAVRVTAHPVAAALCSAFGGALVSTSANPSARRPARSVAEVRRYFGTRIDALVPGRLGGLERPTPIRDGRSGAYLRR.

The 182-residue stretch at 10 to 191 (PFRVRHAAAE…DGRSGAYLRR (182 aa)) folds into the YrdC-like domain.

This sequence belongs to the SUA5 family. TsaC subfamily.

Its subcellular location is the cytoplasm. It carries out the reaction L-threonine + hydrogencarbonate + ATP = L-threonylcarbamoyladenylate + diphosphate + H2O. Required for the formation of a threonylcarbamoyl group on adenosine at position 37 (t(6)A37) in tRNAs that read codons beginning with adenine. Catalyzes the conversion of L-threonine, HCO(3)(-)/CO(2) and ATP to give threonylcarbamoyl-AMP (TC-AMP) as the acyladenylate intermediate, with the release of diphosphate. The protein is Threonylcarbamoyl-AMP synthase of Halorhodospira halophila (strain DSM 244 / SL1) (Ectothiorhodospira halophila (strain DSM 244 / SL1)).